The sequence spans 473 residues: Glycine--tRNA ligase (473 aa).

2 residues coordinate substrate: Arg101 and Glu172. ATP contacts are provided by residues 204–206, 214–219, 289–290, and 333–336; these read RNE, FRTREF, EL, and GVER. 219 to 223 provides a ligand contact to substrate; that stretch reads FEQME. A substrate-binding site is contributed by 329–333; it reads EPSVG.

The protein belongs to the class-II aminoacyl-tRNA synthetase family. As to quaternary structure, homodimer.

Its subcellular location is the cytoplasm. It carries out the reaction tRNA(Gly) + glycine + ATP = glycyl-tRNA(Gly) + AMP + diphosphate. Its function is as follows. Catalyzes the attachment of glycine to tRNA(Gly). This is Glycine--tRNA ligase from Ureaplasma parvum serovar 3 (strain ATCC 27815 / 27 / NCTC 11736).